The following is a 305-amino-acid chain: Foldase protein PrsA (305 aa).

The first 19 residues, 1–19 (MKKWFIALAGLLLTVTLAG), serve as a signal peptide directing secretion. Cysteine 20 carries N-palmitoyl cysteine lipidation. Residue cysteine 20 is the site of S-diacylglycerol cysteine attachment. Positions 136 to 235 (EPEVSVAHIL…YGYHVILMLK (100 aa)) constitute a PpiC domain.

This sequence belongs to the PrsA family.

It localises to the cell membrane. It carries out the reaction [protein]-peptidylproline (omega=180) = [protein]-peptidylproline (omega=0). In terms of biological role, plays a major role in protein secretion by helping the post-translocational extracellular folding of several secreted proteins. The sequence is that of Foldase protein PrsA from Levilactobacillus brevis (strain ATCC 367 / BCRC 12310 / CIP 105137 / JCM 1170 / LMG 11437 / NCIMB 947 / NCTC 947) (Lactobacillus brevis).